Reading from the N-terminus, the 277-residue chain is Large ribosomal subunit protein uL2 (277 aa).

The interval 222 to 265 (GVAMNPIDHPHGGGEGRTSGGRHPVTPWGKPTKGKKTRTNKSTD) is disordered.

Belongs to the universal ribosomal protein uL2 family. Part of the 50S ribosomal subunit. Forms a bridge to the 30S subunit in the 70S ribosome.

Functionally, one of the primary rRNA binding proteins. Required for association of the 30S and 50S subunits to form the 70S ribosome, for tRNA binding and peptide bond formation. It has been suggested to have peptidyltransferase activity; this is somewhat controversial. Makes several contacts with the 16S rRNA in the 70S ribosome. In Bradyrhizobium sp. (strain BTAi1 / ATCC BAA-1182), this protein is Large ribosomal subunit protein uL2.